Reading from the N-terminus, the 179-residue chain is ECF RNA polymerase sigma factor SigF (179 aa).

A sigma-70 factor domain-2 region spans residues 33-93; the sequence is RLRAYFMRRM…KLIDHWRRRK (61 aa). Positions 51-64 match the Polymerase core binding motif; sequence DLVQETLLAVHLKR. The sigma-70 factor domain-4 stretch occupies residues 123-170; sequence ALASLPQRQRMLVSDVKLTGLSLAEAGARAGISEGAAKVALHRALKAL. The segment at residues 145–164 is a DNA-binding region (H-T-H motif); the sequence is LAEAGARAGISEGAAKVALH.

Belongs to the sigma-70 factor family. ECF subfamily.

The protein localises to the cytoplasm. Functionally, sigma factors are initiation factors that promote the attachment of RNA polymerase to specific initiation sites and are then released. Extracytoplasmic function (ECF) sigma factors are held in an inactive form by a cognate anti-sigma factor (NrsF in this case) until they are released. Up-regulates expression of 4 operons (sigF-nrsF, CCNA_02834, CCNA_03001 to CCNA_02999 and CCNA_03363 to CCNA_03366) in response to potassium dichromate (K(2)Cr(2)O(7)) or cadmium chloride (CdCl(2)). Overexpression of sigF leads to higher expression of its regulon. This is ECF RNA polymerase sigma factor SigF from Caulobacter vibrioides (strain NA1000 / CB15N) (Caulobacter crescentus).